Here is a 384-residue protein sequence, read N- to C-terminus: O-phospho-L-seryl-tRNA:Cys-tRNA synthase 1 (384 aa).

Pyridoxal 5'-phosphate-binding positions include 88 to 89, asparagine 195, and 218 to 220; these read AR and SGH. The residue at position 221 (lysine 221) is an N6-(pyridoxal phosphate)lysine.

The protein belongs to the SepCysS family. As to quaternary structure, homodimer. Interacts with SepRS. Pyridoxal 5'-phosphate serves as cofactor.

It catalyses the reaction O-phospho-L-seryl-tRNA(Cys) + hydrogen sulfide + H(+) = L-cysteinyl-tRNA(Cys) + phosphate. In terms of biological role, converts O-phospho-L-seryl-tRNA(Cys) (Sep-tRNA(Cys)) to L-cysteinyl-tRNA(Cys) (Cys-tRNA(Cys)). This chain is O-phospho-L-seryl-tRNA:Cys-tRNA synthase 1, found in Methanocella arvoryzae (strain DSM 22066 / NBRC 105507 / MRE50).